A 101-amino-acid chain; its full sequence is Glutaredoxin-1 (101 aa).

The Glutaredoxin domain maps to 3-101; the sequence is DSFVQSKLRD…MMLRQIGALV (99 aa). Cysteines 23 and 26 form a disulfide.

Belongs to the glutaredoxin family.

The protein localises to the cytoplasm. Functionally, has a glutathione-disulfide oxidoreductase activity in the presence of NADPH and glutathione reductase. Reduces low molecular weight disulfides and proteins. This is Glutaredoxin-1 (GLRX) from Gallus gallus (Chicken).